The sequence spans 456 residues: MRYTVFKACKELVAAAVLLSGTVLTGQAALSETLTGALVKAYKNNAPLNSSRAGVRIQDENVAIAKSAYRPQITGSYNISRGKTPATDYRTTGTVGIQLNQMLFDGFQTRNNVAAAETQVFAQRENLRNDEQNTLYQAVAAYMDVYQLRQIAALREKNLAAMNEQVRAARARLDVGEGTRTDVAQAEASRSTAIAALNAARADVKTAEATYMQVVGSLPDKLTPASAARHLPQSPSQAYASALASHPGILATKYAVNAAGYNVKAKEGALLPTIGLTASASQLDTIAGTDMGDGNTASIGVGVNIPIYTGGRTSAQIRQSKEQLGQARIEVDVVQDKVRQAISSAWSQLEAARASVAANRDGIAAAQLALDGVIEERKVGQRTTLDVLNAQNDLVAVQIALVQAEHDVVVASYALLNATGRMTADQLGLQVAQYKPEEHYKAVKDKWFGLRTPDGR.

The signal sequence occupies residues 1–28 (MRYTVFKACKELVAAAVLLSGTVLTGQA). Positions 312–341 (RTSAQIRQSKEQLGQARIEVDVVQDKVRQA) form a coiled coil.

It belongs to the outer membrane factor (OMF) (TC 1.B.17) family. As to quaternary structure, probably part of a tripartite efflux pump, which is composed of an outer membrane efflux protein, an inner membrane protein and a protein that expands the periplasmic space. Could form a tripartite pump with BepD and BepE or with BepF and BepG.

Its subcellular location is the cell outer membrane. Involved in the efflux of toxic and relatively hydrophobic compounds. Influences survival inside the host. This chain is Outer membrane efflux protein BepC (bepC), found in Brucella suis biovar 1 (strain 1330).